A 379-amino-acid polypeptide reads, in one-letter code: Ribosomal RNA large subunit methyltransferase G (379 aa).

It belongs to the methyltransferase superfamily. RlmG family.

It is found in the cytoplasm. The enzyme catalyses guanosine(1835) in 23S rRNA + S-adenosyl-L-methionine = N(2)-methylguanosine(1835) in 23S rRNA + S-adenosyl-L-homocysteine + H(+). Functionally, specifically methylates the guanine in position 1835 (m2G1835) of 23S rRNA. This Pectobacterium atrosepticum (strain SCRI 1043 / ATCC BAA-672) (Erwinia carotovora subsp. atroseptica) protein is Ribosomal RNA large subunit methyltransferase G.